A 102-amino-acid chain; its full sequence is MAVRWYCWQQEALIIQIRLQPRAKGDEVIGPHGDRLKIRITAPPVEGKANTHLLRFLAKTFQVSRNQVYLLSGATSRDKRVRIEKPTKLLPGITPPIRKTVR.

The protein belongs to the UPF0235 family.

The polypeptide is UPF0235 protein Noc_3000 (Nitrosococcus oceani (strain ATCC 19707 / BCRC 17464 / JCM 30415 / NCIMB 11848 / C-107)).